We begin with the raw amino-acid sequence, 671 residues long: Probable potassium transport system protein Kup 2 (671 aa).

12 helical membrane passes run 18–38, 60–80, 103–123, 146–166, 173–193, 218–238, 252–272, 292–312, 343–363, 373–393, 402–422, and 424–444; these read GFLIALGIVYGDIGTSPLYAM, VSLVIWTLTLITTVKYVLIAL, WLIIPAMIGGATLLADGALTP, AVMVTTLIILAFLFLIQRFGA, FGPIMFIWFGFLGVSGLINSF, AGFFILGSIFLVTTGAEALYS, WPFVKICIILSYCGQGAWLLA, MVIYVVILSTLAAIIASQALI, LYIPAVNFALWVTTSFFVLYF, YSLAITITMLMTTTLLTYFLI, IAIISIGLFCIEGSFFAASLV, and FINGAYIVVLIALAIIFVMFI.

It belongs to the HAK/KUP transporter (TC 2.A.72) family.

The protein localises to the cell membrane. The catalysed reaction is K(+)(in) + H(+)(in) = K(+)(out) + H(+)(out). Its function is as follows. Transport of potassium into the cell. Likely operates as a K(+):H(+) symporter. This chain is Probable potassium transport system protein Kup 2, found in Lactococcus lactis subsp. lactis (strain IL1403) (Streptococcus lactis).